Consider the following 69-residue polypeptide: Protein transport protein Sec61 subunit gamma (69 aa).

Residues 1-40 (MDILEETAAPLKDFAKNSIRLFKKCTKPDAQEFQKIALAT) lie on the Cytoplasmic side of the membrane. A helical transmembrane segment spans residues 41–61 (LIGFAIMGFIGFFVKLIHIPI). Topologically, residues 62–69 (NNILVGGV) are extracellular.

The protein belongs to the SecE/SEC61-gamma family. In terms of assembly, heterotrimeric complex composed of SEC61-alpha, SEC61-beta and SEC61-gamma.

The protein resides in the endoplasmic reticulum membrane. Its function is as follows. Necessary for protein translocation in the endoplasmic reticulum. The sequence is that of Protein transport protein Sec61 subunit gamma (sec61g) from Dictyostelium discoideum (Social amoeba).